The primary structure comprises 1341 residues: Aldehyde oxidase 4 (1341 aa).

In terms of domain architecture, 2Fe-2S ferredoxin-type spans 8–95; it reads DELIFFVNGK…GAAVTTVEGV (88 aa). [2Fe-2S] cluster is bound by residues C47, C52, C55, and C77. Mo-molybdopterin is bound at residue Q116. Residues C117, C120, C152, and C154 each contribute to the [2Fe-2S] cluster site. C154 contributes to the Mo-molybdopterin binding site. Residues 239–424 form the FAD-binding PCMH-type domain; it reads FQGERTTWLA…LSVFIPYSSQ (186 aa). FAD is bound by residues 267-274, A348, T357, H361, D370, and V414; that span reads LIMGNTTV. Residues A805, 805–806, L1046, 1087–1090, Q1202, and L1266 contribute to the Mo-molybdopterin site; these read AF and GSMG. Residue E1268 is the Proton acceptor; for azaheterocycle hydroxylase activity of the active site.

Belongs to the xanthine dehydrogenase family. As to quaternary structure, homodimer. The cofactor is [2Fe-2S] cluster. Requires FAD as cofactor. It depends on Mo-molybdopterin as a cofactor. As to expression, detected in liver, testis, kidney, brain, Harderian gland and olfactory mucosa.

Its subcellular location is the cytoplasm. The catalysed reaction is an aldehyde + O2 + H2O = a carboxylate + H2O2 + H(+). The enzyme catalyses retinal + O2 + H2O = retinoate + H2O2 + H(+). Aldehyde oxidase able to catalyze the oxidation of retinaldehyde into retinoate. Acts as a negative modulator of the epidermal trophism. May be able to oxidize a wide variety of aldehydes into their corresponding carboxylates and to hydroxylate azaheterocycles. This chain is Aldehyde oxidase 4 (AOX4), found in Cavia porcellus (Guinea pig).